The following is a 643-amino-acid chain: Methyl-accepting chemotaxis protein McpA (643 aa).

The helical transmembrane segment at 24 to 44 (ILLSACGVVVLAFALFTLYND) threads the bilayer. Positions 49–273 (NTIRQNIEAS…GLPSAQWYIG (225 aa)) constitute a Cache domain. The chain crosses the membrane as a helical span at residues 293–313 (IIAMLIAVAAIAGLLGLLIPV). The HAMP domain occupies 312–366 (PVLMSPLTTMGRAMRDIAEGEGDLTRRLAVQNKDEFGELATSFNRFVERIHASIS). The 237-residue stretch at 371-607 (ATRLVHDLSE…SLNLDITQIN (237 aa)) folds into the Methyl-accepting transducer domain.

It belongs to the methyl-accepting chemotaxis (MCP) protein family.

It is found in the cell membrane. Chemotactic-signal transducers respond to changes in the concentration of attractants and repellents in the environment, transduce a signal from the outside to the inside of the cell, and facilitate sensory adaptation through the variation of the level of methylation. McpA is a chemoreceptor that binds to 12 different L-amino acids and mediates chemotaxis toward these amino acids. This chain is Methyl-accepting chemotaxis protein McpA, found in Pseudomonas putida (strain ATCC 47054 / DSM 6125 / CFBP 8728 / NCIMB 11950 / KT2440).